Consider the following 1097-residue polypeptide: MSSAIQVAKTATYLPDLVEVQRGSFKWFLEKGLIEELESFSPITDYTGKLELHFVGSEYRLKRPRHDVEEAKRRDATFASQMYVTCRLVNKETGEIKEQEVFIGELPLMTERGTFIINGAERVIVNQIVRSPGVYFKDEQDKNGRRTYNASLIPNRGAWLKFETDKNDLLHVRVDKTRKINAHVMMRAIGLSDNDVLDKLRHPEYYKKSIDAANEEGISSEDQALLELYKKLRPGEPPSVSGGQQLLHSRFFDPKRYDLGRVGRYKMNKKLRLTIPDAVRTLTPEDVLSTLDYLINLELDVGGACLDDIDHLGNRRVRSVGELLQNQVRVGLNRLERIIKERMTVGETDSLTPAQLVNPKPLVAAIKEFFGSSQLSQFMDQTNPLAELTHKRRISALGPGVLTRERAGFAVRDIHPSHYGRICPIETPEGPNAGLIGSLATHARVNEYGFIETPFWKVTDGVVDKSGDPIYLSADLEDECRVAPGDVATDADGRITAELIPVRYRLDFETVPPNQVDYVQLSPVQVISVAASLIPFLEHDDANRALMGSNMQRQAVPLLRPERPLVGTGLETQVARDSGMVPITRVNGEVVFVDSTQIIVRDDQGVDHYHLLQKYQRSNQDTCLNQRPIVQQGDQVIAGQVLANGSACEGGEIALGQNCLIAYMPWEGYNYEDAILVSERLVRDDLYTSVHIEKYEIEARQTKLGPEEITREIPNVAEESLGNLDEMGIIRIGAFVESGDILVGKVTPKGESDQPPEEKLLRAIFGEKARDVRDNSLRVPNTERGRVVDVRIYTREQGDELPPGANMVVRVYVAQRRKIQVGDKMAGRHGNKGIISRILPLEDMPYLPDGTPIDIVLNPLGVPSRMNVGQVFECALMGWAADNLDSRFKIVPFDEMHGAEKSRETVEGYLKEAAKQPGREWVYDPENPGKIQLIDGRSGEPFDQPVTVGRAYILKLVHLVDDKIHARSTGPYSLVTQQPLGGKAQQGGQRLGEMEVWALEAYGAAYTLQELLTVKSDDMQGRNEALNAIVKGKPIPRPGTPESFKVLMRELQSLGLDIAVYTDEGAEVDLMQDVNPRRSTPSRPTYESLGVADYDED.

A disordered region spans residues 1073 to 1097; that stretch reads DVNPRRSTPSRPTYESLGVADYDED.

Belongs to the RNA polymerase beta chain family. As to quaternary structure, in cyanobacteria the RNAP catalytic core is composed of 2 alpha, 1 beta, 1 beta', 1 gamma and 1 omega subunit. When a sigma factor is associated with the core the holoenzyme is formed, which can initiate transcription.

It carries out the reaction RNA(n) + a ribonucleoside 5'-triphosphate = RNA(n+1) + diphosphate. In terms of biological role, DNA-dependent RNA polymerase catalyzes the transcription of DNA into RNA using the four ribonucleoside triphosphates as substrates. The chain is DNA-directed RNA polymerase subunit beta from Synechococcus sp. (strain RCC307).